A 244-amino-acid chain; its full sequence is MNEIRETLVQTPKKATAVIRAEALAKTYAEGKMRTPVFDGLDLSVATGETVAIVGASGAGKSTLLHLLGGLDIPTSGEVYVAGERMSALSDAQRGKLRNQALGFVYQFHHLLPEFTALENVMMPVLLSGEDVAVAKSQALQLLESVGLGHRVEHKPSELSGGERQRCAVARALVNKPGCVLGDEPTGNLDDKTAGTVFELMLELNRAQRTSLVLVTHDRGLARRLDRVLELHQGKLRELAPSAV.

Positions 19-244 constitute an ABC transporter domain; that stretch reads IRAEALAKTY…KLRELAPSAV (226 aa). Residue 55–62 participates in ATP binding; it reads GASGAGKS.

The protein belongs to the ABC transporter superfamily. Lipoprotein translocase (TC 3.A.1.125) family. In terms of assembly, the complex is composed of two ATP-binding proteins (LolD) and two transmembrane proteins (LolC and LolE).

It is found in the cell inner membrane. Functionally, part of the ABC transporter complex LolCDE involved in the translocation of mature outer membrane-directed lipoproteins, from the inner membrane to the periplasmic chaperone, LolA. Responsible for the formation of the LolA-lipoprotein complex in an ATP-dependent manner. This Xanthomonas axonopodis pv. citri (strain 306) protein is Lipoprotein-releasing system ATP-binding protein LolD.